Consider the following 464-residue polypeptide: Phosphoglucosamine mutase (464 aa).

Residue S112 is the Phosphoserine intermediate of the active site. Residues S112, D252, D254, and D256 each coordinate Mg(2+). At S112 the chain carries Phosphoserine.

The protein belongs to the phosphohexose mutase family. It depends on Mg(2+) as a cofactor. In terms of processing, activated by phosphorylation.

It catalyses the reaction alpha-D-glucosamine 1-phosphate = D-glucosamine 6-phosphate. Its function is as follows. Catalyzes the conversion of glucosamine-6-phosphate to glucosamine-1-phosphate. The chain is Phosphoglucosamine mutase from Synechococcus sp. (strain CC9605).